A 317-amino-acid polypeptide reads, in one-letter code: MTTQLDSLRNMTVVVADTGDIDAIKKYQPQDATTNPSLILSASALPQYAPLIDEAVAYAKAQSNDKAQQLIDAEDKLAVNIGLEILKIVPGRISTEVDARLSYNTQATVEKARKLIALYNAAGISNDRILIKIASTWQGIRAAEILEKEGINCNLTLLFSEAQARACAEAGVYLISPFVGRILDWYKANSDKKEYAPAEDPGVISVTKIYNYYKEYGYNTVVMGASFRNVGEITELAGCDRLTIAPALLKELQENSTALIRKLEYKGEVKAKPQPLTEAEFYWQHNSDAMAVEKLAEGIRKFAIDQEKLETMLSAKL.

Catalysis depends on Lys-132, which acts as the Schiff-base intermediate with substrate.

The protein belongs to the transaldolase family. Type 1 subfamily. Homodimer.

The protein localises to the cytoplasm. The catalysed reaction is D-sedoheptulose 7-phosphate + D-glyceraldehyde 3-phosphate = D-erythrose 4-phosphate + beta-D-fructose 6-phosphate. It participates in carbohydrate degradation; pentose phosphate pathway; D-glyceraldehyde 3-phosphate and beta-D-fructose 6-phosphate from D-ribose 5-phosphate and D-xylulose 5-phosphate (non-oxidative stage): step 2/3. Transaldolase is important for the balance of metabolites in the pentose-phosphate pathway. In Haemophilus influenzae (strain 86-028NP), this protein is Transaldolase.